Here is a 318-residue protein sequence, read N- to C-terminus: Putative enoyl-CoA hydratase EchA13 (318 aa).

Positions 90-110 (LGSADDIRERSPGPDQHPSYR) are disordered.

The protein belongs to the enoyl-CoA hydratase/isomerase family.

This Mycobacterium tuberculosis (strain ATCC 25618 / H37Rv) protein is Putative enoyl-CoA hydratase EchA13 (echA13).